The sequence spans 120 residues: Large ribosomal subunit protein uL14 (120 aa).

The protein belongs to the universal ribosomal protein uL14 family. As to quaternary structure, part of the 50S ribosomal subunit. Forms a cluster with proteins L3 and L19. In the 70S ribosome, L14 and L19 interact and together make contacts with the 16S rRNA in bridges B5 and B8.

Its function is as follows. Binds to 23S rRNA. Forms part of two intersubunit bridges in the 70S ribosome. The protein is Large ribosomal subunit protein uL14 of Dictyoglomus thermophilum (strain ATCC 35947 / DSM 3960 / H-6-12).